Consider the following 361-residue polypeptide: MSAAFDPSSYATQLDAKVARLRELLAPFGAPEPAVFDSPREHYRLRAEFRLWREDGQRHYAMFAPGEKHKAILIDDFPIASERINALMPRLKAAWQASEELGNRLFQVEFLTTLAGDAMITMCYHRPLDEAWEVEARQLAEALGVSVIGRSKGKRLVIGRDYAVEKLDVAGRVFSYRQPEGAFTQPNGAVNQKMLSWAFEAIGEREDDLLELYCGNGNFTLPLATRVRQVLATEISKTSVNAALSNLDENAVDNVRLVRLSAEELTQALNEVRPFRRLEGIDLKSYQFGTVFVDPPRAGMDPDTCELTRRFERILYISCNPETLAANIAQLQDTHRIERCALFDQFPYTHHMESGVLLVRR.

S-adenosyl-L-methionine contacts are provided by Gln-185, Tyr-213, Asn-218, Glu-234, and Asp-294. Residue Cys-319 is the Nucleophile of the active site. The Proton acceptor role is filled by Glu-353.

It belongs to the class I-like SAM-binding methyltransferase superfamily. RNA M5U methyltransferase family. TrmA subfamily.

The catalysed reaction is uridine(54) in tRNA + S-adenosyl-L-methionine = 5-methyluridine(54) in tRNA + S-adenosyl-L-homocysteine + H(+). It carries out the reaction uridine(341) in tmRNA + S-adenosyl-L-methionine = 5-methyluridine(341) in tmRNA + S-adenosyl-L-homocysteine + H(+). Dual-specificity methyltransferase that catalyzes the formation of 5-methyluridine at position 54 (m5U54) in all tRNAs, and that of position 341 (m5U341) in tmRNA (transfer-mRNA). The chain is tRNA/tmRNA (uracil-C(5))-methyltransferase from Pseudomonas putida (strain ATCC 47054 / DSM 6125 / CFBP 8728 / NCIMB 11950 / KT2440).